The primary structure comprises 330 residues: ADP-L-glycero-D-manno-heptose-6-epimerase (330 aa).

Residues 11-12 (FI), 32-33 (DN), K39, K54, 75-79 (EGACS), and N92 each bind NADP(+). Y139 serves as the catalytic Proton acceptor. K143 contributes to the NADP(+) binding site. N168 provides a ligand contact to substrate. NADP(+) contacts are provided by V169 and K177. Residue K177 is the Proton acceptor of the active site. Substrate contacts are provided by residues R179, H186, 200-203 (FGEY), R213, and Y292.

It belongs to the NAD(P)-dependent epimerase/dehydratase family. HldD subfamily. As to quaternary structure, homopentamer. Requires NADP(+) as cofactor.

It catalyses the reaction ADP-D-glycero-beta-D-manno-heptose = ADP-L-glycero-beta-D-manno-heptose. It functions in the pathway nucleotide-sugar biosynthesis; ADP-L-glycero-beta-D-manno-heptose biosynthesis; ADP-L-glycero-beta-D-manno-heptose from D-glycero-beta-D-manno-heptose 7-phosphate: step 4/4. Its function is as follows. Catalyzes the interconversion between ADP-D-glycero-beta-D-manno-heptose and ADP-L-glycero-beta-D-manno-heptose via an epimerization at carbon 6 of the heptose. The protein is ADP-L-glycero-D-manno-heptose-6-epimerase of Paraburkholderia phymatum (strain DSM 17167 / CIP 108236 / LMG 21445 / STM815) (Burkholderia phymatum).